The sequence spans 496 residues: Bifunctional protein HldE (496 aa).

Positions 1–335 (MIKHNPPSPE…GALFRSHGPT (335 aa)) are ribokinase. 211–214 (NRKE) is an ATP binding site. Residue D280 is part of the active site. A cytidylyltransferase region spans residues 363-496 (FTNGCFDILH…IGKLRAGSTS (134 aa)).

The protein in the N-terminal section; belongs to the carbohydrate kinase PfkB family. In the C-terminal section; belongs to the cytidylyltransferase family. In terms of assembly, homodimer.

The catalysed reaction is D-glycero-beta-D-manno-heptose 7-phosphate + ATP = D-glycero-beta-D-manno-heptose 1,7-bisphosphate + ADP + H(+). It carries out the reaction D-glycero-beta-D-manno-heptose 1-phosphate + ATP + H(+) = ADP-D-glycero-beta-D-manno-heptose + diphosphate. It functions in the pathway nucleotide-sugar biosynthesis; ADP-L-glycero-beta-D-manno-heptose biosynthesis; ADP-L-glycero-beta-D-manno-heptose from D-glycero-beta-D-manno-heptose 7-phosphate: step 1/4. Its pathway is nucleotide-sugar biosynthesis; ADP-L-glycero-beta-D-manno-heptose biosynthesis; ADP-L-glycero-beta-D-manno-heptose from D-glycero-beta-D-manno-heptose 7-phosphate: step 3/4. Functionally, catalyzes the phosphorylation of D-glycero-D-manno-heptose 7-phosphate at the C-1 position to selectively form D-glycero-beta-D-manno-heptose-1,7-bisphosphate. Catalyzes the ADP transfer from ATP to D-glycero-beta-D-manno-heptose 1-phosphate, yielding ADP-D-glycero-beta-D-manno-heptose. The sequence is that of Bifunctional protein HldE from Mesorhizobium japonicum (strain LMG 29417 / CECT 9101 / MAFF 303099) (Mesorhizobium loti (strain MAFF 303099)).